Consider the following 195-residue polypeptide: Probable DNA-directed RNA polymerase subunit delta (195 aa).

Residues 14–81 form the HTH HARE-type domain; that stretch reads FALVEIATAI…GNNEWALRAW (68 aa). Composition is skewed to acidic residues over residues 120-172 and 181-195; these read DDDV…DESI and GGDD…DQEK. The segment at 120-195 is disordered; the sequence is DDDVIDYNDD…DDLSDGDQEK (76 aa).

It belongs to the RpoE family. RNAP is composed of a core of 2 alpha, a beta and a beta' subunits. The core is associated with a delta subunit and one of several sigma factors.

Functionally, participates in both the initiation and recycling phases of transcription. In the presence of the delta subunit, RNAP displays an increased specificity of transcription, a decreased affinity for nucleic acids, and an increased efficiency of RNA synthesis because of enhanced recycling. In Leuconostoc mesenteroides subsp. mesenteroides (strain ATCC 8293 / DSM 20343 / BCRC 11652 / CCM 1803 / JCM 6124 / NCDO 523 / NBRC 100496 / NCIMB 8023 / NCTC 12954 / NRRL B-1118 / 37Y), this protein is Probable DNA-directed RNA polymerase subunit delta.